The following is a 478-amino-acid chain: Methionine aminopeptidase 2-1 (478 aa).

Residues 1–124 (MGSKSPEGHN…PRVPLSTLFP (124 aa)) form a disordered region. A compositionally biased stretch (acidic residues) spans 46–56 (NDDDDADDDEK). The segment covering 92–104 (KKKKKRKRSKKKA) has biased composition (basic residues). H230 contacts substrate. Residues D251, D262, and H331 each contribute to the a divalent metal cation site. H339 is a binding site for substrate. E364 and E459 together coordinate a divalent metal cation.

Belongs to the peptidase M24A family. Methionine aminopeptidase eukaryotic type 2 subfamily. The cofactor is Co(2+). It depends on Zn(2+) as a cofactor. Mn(2+) serves as cofactor. Requires Fe(2+) as cofactor.

The protein localises to the cytoplasm. It carries out the reaction Release of N-terminal amino acids, preferentially methionine, from peptides and arylamides.. In terms of biological role, cotranslationally removes the N-terminal methionine from nascent proteins. The N-terminal methionine is often cleaved when the second residue in the primary sequence is small and uncharged (Met-Ala-, Cys, Gly, Pro, Ser, Thr, or Val). In Aspergillus clavatus (strain ATCC 1007 / CBS 513.65 / DSM 816 / NCTC 3887 / NRRL 1 / QM 1276 / 107), this protein is Methionine aminopeptidase 2-1.